Reading from the N-terminus, the 528-residue chain is tRNA-2-methylthio-N(6)-dimethylallyladenosine synthase (528 aa).

The MTTase N-terminal domain maps to 19-134; that stretch reads RTYEVRTYGC…LPTLLERARH (116 aa). Residues C28, C63, C97, C171, C175, and C178 each contribute to the [4Fe-4S] cluster site. One can recognise a Radical SAM core domain in the interval 157–387; sequence RDEIASGWVS…TALQERISHE (231 aa). Positions 390–460 constitute a TRAM domain; the sequence is QRVVGRTVEV…PFHLIADSVD (71 aa).

This sequence belongs to the methylthiotransferase family. MiaB subfamily. In terms of assembly, monomer. [4Fe-4S] cluster serves as cofactor.

The protein localises to the cytoplasm. It catalyses the reaction N(6)-dimethylallyladenosine(37) in tRNA + (sulfur carrier)-SH + AH2 + 2 S-adenosyl-L-methionine = 2-methylsulfanyl-N(6)-dimethylallyladenosine(37) in tRNA + (sulfur carrier)-H + 5'-deoxyadenosine + L-methionine + A + S-adenosyl-L-homocysteine + 2 H(+). Catalyzes the methylthiolation of N6-(dimethylallyl)adenosine (i(6)A), leading to the formation of 2-methylthio-N6-(dimethylallyl)adenosine (ms(2)i(6)A) at position 37 in tRNAs that read codons beginning with uridine. The polypeptide is tRNA-2-methylthio-N(6)-dimethylallyladenosine synthase (Clavibacter michiganensis subsp. michiganensis (strain NCPPB 382)).